We begin with the raw amino-acid sequence, 225 residues long: 7-carboxy-7-deazaguanine synthase (225 aa).

Substrate-binding positions include 12 to 14 (IQG) and Arg-27. Residues 18–225 (YIGVRQLFVR…PQVHKYLGVR (208 aa)) enclose the Radical SAM core domain. The [4Fe-4S] cluster site is built by Cys-31, Cys-35, and Cys-38. Residue Thr-40 participates in Mg(2+) binding. Thr-80 is a binding site for substrate. Gly-82 provides a ligand contact to S-adenosyl-L-methionine.

It belongs to the radical SAM superfamily. 7-carboxy-7-deazaguanine synthase family. As to quaternary structure, homodimer. The cofactor is [4Fe-4S] cluster. Requires S-adenosyl-L-methionine as cofactor. Mg(2+) serves as cofactor.

It carries out the reaction 6-carboxy-5,6,7,8-tetrahydropterin + H(+) = 7-carboxy-7-deazaguanine + NH4(+). It functions in the pathway purine metabolism; 7-cyano-7-deazaguanine biosynthesis. Its function is as follows. Catalyzes the complex heterocyclic radical-mediated conversion of 6-carboxy-5,6,7,8-tetrahydropterin (CPH4) to 7-carboxy-7-deazaguanine (CDG), a step common to the biosynthetic pathways of all 7-deazapurine-containing compounds. In Archaeoglobus fulgidus (strain ATCC 49558 / DSM 4304 / JCM 9628 / NBRC 100126 / VC-16), this protein is 7-carboxy-7-deazaguanine synthase.